The following is a 143-amino-acid chain: Probable prefoldin subunit 2 (143 aa).

It belongs to the prefoldin subunit beta family. Heterohexamer of two PFD-alpha type and four PFD-beta type subunits.

Functionally, binds specifically to cytosolic chaperonin (c-CPN) and transfers target proteins to it. Binds to nascent polypeptide chain and promotes folding in an environment in which there are many competing pathways for nonnative proteins. In Drosophila melanogaster (Fruit fly), this protein is Probable prefoldin subunit 2.